We begin with the raw amino-acid sequence, 207 residues long: Ribosomal RNA small subunit methyltransferase G (207 aa).

Residues Gly-75, Leu-80, 126–127 (VE), and Arg-141 contribute to the S-adenosyl-L-methionine site.

This sequence belongs to the methyltransferase superfamily. RNA methyltransferase RsmG family.

It is found in the cytoplasm. It carries out the reaction guanosine(527) in 16S rRNA + S-adenosyl-L-methionine = N(7)-methylguanosine(527) in 16S rRNA + S-adenosyl-L-homocysteine. Functionally, specifically methylates the N7 position of guanine in position 527 of 16S rRNA. The polypeptide is Ribosomal RNA small subunit methyltransferase G (Psychromonas ingrahamii (strain DSM 17664 / CCUG 51855 / 37)).